Here is a 367-residue protein sequence, read N- to C-terminus: DNA replication and repair protein RecF (367 aa).

An ATP-binding site is contributed by 30-37 (GENAQGKT).

Belongs to the RecF family.

Its subcellular location is the cytoplasm. The RecF protein is involved in DNA metabolism; it is required for DNA replication and normal SOS inducibility. RecF binds preferentially to single-stranded, linear DNA. It also seems to bind ATP. The polypeptide is DNA replication and repair protein RecF (Chlamydia abortus (strain DSM 27085 / S26/3) (Chlamydophila abortus)).